A 209-amino-acid polypeptide reads, in one-letter code: ATP phosphoribosyltransferase (209 aa).

Belongs to the ATP phosphoribosyltransferase family. Short subfamily. Heteromultimer composed of HisG and HisZ subunits.

The protein localises to the cytoplasm. It carries out the reaction 1-(5-phospho-beta-D-ribosyl)-ATP + diphosphate = 5-phospho-alpha-D-ribose 1-diphosphate + ATP. The protein operates within amino-acid biosynthesis; L-histidine biosynthesis; L-histidine from 5-phospho-alpha-D-ribose 1-diphosphate: step 1/9. Functionally, catalyzes the condensation of ATP and 5-phosphoribose 1-diphosphate to form N'-(5'-phosphoribosyl)-ATP (PR-ATP). Has a crucial role in the pathway because the rate of histidine biosynthesis seems to be controlled primarily by regulation of HisG enzymatic activity. The polypeptide is ATP phosphoribosyltransferase (Sulfurimonas denitrificans (strain ATCC 33889 / DSM 1251) (Thiomicrospira denitrificans (strain ATCC 33889 / DSM 1251))).